The primary structure comprises 230 residues: Large ribosomal subunit protein uL1 (230 aa).

This sequence belongs to the universal ribosomal protein uL1 family. Part of the 50S ribosomal subunit.

Binds directly to 23S rRNA. The L1 stalk is quite mobile in the ribosome, and is involved in E site tRNA release. In terms of biological role, protein L1 is also a translational repressor protein, it controls the translation of the L11 operon by binding to its mRNA. The sequence is that of Large ribosomal subunit protein uL1 from Bradyrhizobium sp. (strain BTAi1 / ATCC BAA-1182).